Reading from the N-terminus, the 335-residue chain is Glycerol-3-phosphate dehydrogenase [NAD(P)+] (335 aa).

NADPH is bound by residues Ser-15, Tyr-16, His-36, and Lys-110. The sn-glycerol 3-phosphate site is built by Lys-110, Gly-139, and Thr-141. NADPH is bound at residue Ala-143. The sn-glycerol 3-phosphate site is built by Lys-195, Asp-248, Ser-258, Arg-259, and Asn-260. Lys-195 acts as the Proton acceptor in catalysis. Arg-259 contributes to the NADPH binding site. Residues Val-283 and Glu-285 each coordinate NADPH.

Belongs to the NAD-dependent glycerol-3-phosphate dehydrogenase family.

The protein localises to the cytoplasm. The catalysed reaction is sn-glycerol 3-phosphate + NAD(+) = dihydroxyacetone phosphate + NADH + H(+). It catalyses the reaction sn-glycerol 3-phosphate + NADP(+) = dihydroxyacetone phosphate + NADPH + H(+). It functions in the pathway membrane lipid metabolism; glycerophospholipid metabolism. Its function is as follows. Catalyzes the reduction of the glycolytic intermediate dihydroxyacetone phosphate (DHAP) to sn-glycerol 3-phosphate (G3P), the key precursor for phospholipid synthesis. This is Glycerol-3-phosphate dehydrogenase [NAD(P)+] from Mannheimia succiniciproducens (strain KCTC 0769BP / MBEL55E).